The following is a 371-amino-acid chain: Putative HAD-like hydrolase Noc_2718 (371 aa).

The interval 1-288 is HAD-like hydrolase; the sequence is MKQKILLCSD…TGREESAEEE (288 aa). The 81-residue stretch at 291–371 folds into the YcgL domain; that stretch reads QSCAIYRSCK…QLSSREYRRS (81 aa).

In the N-terminal section; belongs to the HAD-like hydrolase superfamily.

The polypeptide is Putative HAD-like hydrolase Noc_2718 (Nitrosococcus oceani (strain ATCC 19707 / BCRC 17464 / JCM 30415 / NCIMB 11848 / C-107)).